The primary structure comprises 491 residues: Glutamyl-tRNA(Gln) amidotransferase subunit A (491 aa).

Active-site charge relay system residues include Lys-79 and Ser-154. Ser-178 acts as the Acyl-ester intermediate in catalysis.

Belongs to the amidase family. GatA subfamily. Heterotrimer of A, B and C subunits.

The enzyme catalyses L-glutamyl-tRNA(Gln) + L-glutamine + ATP + H2O = L-glutaminyl-tRNA(Gln) + L-glutamate + ADP + phosphate + H(+). Allows the formation of correctly charged Gln-tRNA(Gln) through the transamidation of misacylated Glu-tRNA(Gln) in organisms which lack glutaminyl-tRNA synthetase. The reaction takes place in the presence of glutamine and ATP through an activated gamma-phospho-Glu-tRNA(Gln). This chain is Glutamyl-tRNA(Gln) amidotransferase subunit A, found in Synechococcus sp. (strain CC9605).